The following is a 1960-amino-acid chain: [F-actin]-monooxygenase MICAL3 (1960 aa).

Positions 2–494 are monooxygenase domain; sequence EESKNEATNR…RHLYDTGDTK (493 aa). FAD-binding positions include C97, 116–118, 123–125, F183, Y298, and D398; these read EKR and RNN. Residues 518–624 enclose the Calponin-homology (CH) domain; the sequence is VARSSKLLGW…YLTQFYEMFK (107 aa). Phosphoserine is present on S649. The interval 658-704 is disordered; the sequence is GQTISRKRSPKDKKEKDLDGAGKRRKTSQSEEEDTPRGHRGARPTLV. Positions 669-679 are enriched in basic and acidic residues; sequence DKKEKDLDGAG. Residues S685 and S687 each carry the phosphoserine modification. Residues 762 to 824 form the LIM zinc-binding domain; the sequence is DTCYFCQKRV…KPHYCYRLSG (63 aa). Residues C764, C767, H785, C788, C791, C794, C814, and H817 each contribute to the Zn(2+) site. Disordered regions lie at residues 826-887 and 906-1295; these read AQRK…LRGT and LEEV…EALK. T887 bears the Phosphothreonine mark. S971 is modified (phosphoserine). The span at 984-1014 shows a compositional bias: acidic residues; sequence GEEEEEDEEDEEEEEEEEDEEDEEEDEDESS. Composition is skewed to basic and acidic residues over residues 1039 to 1051 and 1072 to 1084; these read HWTH…EERA and DVDS…KGEA. Residues S1129, S1139, S1156, and S1188 each carry the phosphoserine modification. Composition is skewed to pro residues over residues 1192-1203 and 1217-1233; these read SPLPEPSTPPAE and RTPP…PPTQ. At S1250 the chain carries Phosphoserine. Phosphothreonine is present on T1252. S1254, S1286, and S1313 each carry phosphoserine. Over residues 1277 to 1286 the composition is skewed to polar residues; sequence QGVTKDTLGS. Disordered regions lie at residues 1316 to 1550 and 1564 to 1782; these read LTPV…KRGL and RMRA…EEEL. At T1317 the chain carries Phosphothreonine. Residues 1379–1393 are compositionally biased toward basic and acidic residues; sequence PDREPKGPREEHRDL. The segment covering 1394–1406 has biased composition (low complexity); sequence SSSSGLGLQGSSS. S1404 carries the post-translational modification Phosphoserine. Residues 1407–1425 are compositionally biased toward polar residues; that stretch reads RTRTPGSQSFNTSDSTMLT. T1425 is subject to Phosphothreonine. Residues 1485 to 1503 show a composition bias toward acidic residues; the sequence is SVDEIPFADDVEDTYDDNT. Residues 1594–1611 show a composition bias toward low complexity; sequence AAAAPRTPRTPAPRRATA. Residues 1616-1627 are compositionally biased toward basic and acidic residues; it reads GPEEPAPRHEAT. Residues 1633–1653 are compositionally biased toward low complexity; sequence SPPSDSGGPDGSVTSSEGSSG. The segment covering 1654–1672 has biased composition (basic residues); sequence KSKKRSSLFSPRRSKKEKK. Phosphoserine is present on residues S1660 and S1663. Polar residues predominate over residues 1718–1727; that stretch reads CPSTPSSGTT. Residues 1762-1778 are compositionally biased toward basic and acidic residues; the sequence is VLERTSQKSRKEPRTYT. Residues 1779–1952 adopt a coiled-coil conformation; it reads EEELNAKLTR…DKDLEAAMLS (174 aa). In terms of domain architecture, bMERB spans 1799–1948; it reads KQEELKRLHR…EKEEDKDLEA (150 aa). S1870 is modified (phosphoserine).

Belongs to the Mical family. Interacts with RAB1B, RAB8A, RAB10, RAB13 and RAB15 (in their GTP-bound forms); binding to RAB1B is of low affinity compared to other Rab proteins; at least in case of RAB8A can bind 2 molecules of RAB8A simultaneously through a high and a low affinity binding site, respectively. Interacts with ERC1 and RAB8A; may bridge ERC1 with RAB8A. Interacts with KIF23 and ERC1; enhances the interaction between KIF23 and ERC1. Interacts with NINL. The cofactor is FAD.

It localises to the cytoplasm. The protein localises to the cell cortex. Its subcellular location is the cytoskeleton. It is found in the nucleus. The protein resides in the midbody. It localises to the spindle. The protein localises to the cilium basal body. It carries out the reaction L-methionyl-[F-actin] + NADPH + O2 + H(+) = L-methionyl-(R)-S-oxide-[F-actin] + NADP(+) + H2O. In terms of biological role, monooxygenase that promotes depolymerization of F-actin by mediating oxidation of specific methionine residues on actin to form methionine-sulfoxide, resulting in actin filament disassembly and preventing repolymerization. In the absence of actin, it also functions as a NADPH oxidase producing H(2)O(2). Seems to act as Rab effector protein and play a role in vesicle trafficking. Involved in exocytic vesicles tethering and fusion: the monooxygenase activity is required for this process and implicates RAB8A associated with exocytotic vesicles. Required for cytokinesis. Contributes to stabilization and/or maturation of the intercellular bridge independently of its monooxygenase activity. Promotes recruitment of Rab8 and ERC1 to the intercellular bridge, and together these proteins are proposed to function in timely abscission. The protein is [F-actin]-monooxygenase MICAL3 (MICAL3) of Bos taurus (Bovine).